Consider the following 207-residue polypeptide: Uridine kinase (207 aa).

Residue 13-20 (GASGSGKT) participates in ATP binding.

This sequence belongs to the uridine kinase family.

It is found in the cytoplasm. The enzyme catalyses uridine + ATP = UMP + ADP + H(+). It catalyses the reaction cytidine + ATP = CMP + ADP + H(+). Its pathway is pyrimidine metabolism; CTP biosynthesis via salvage pathway; CTP from cytidine: step 1/3. It participates in pyrimidine metabolism; UMP biosynthesis via salvage pathway; UMP from uridine: step 1/1. The sequence is that of Uridine kinase from Ureaplasma parvum serovar 3 (strain ATCC 27815 / 27 / NCTC 11736).